A 93-amino-acid chain; its full sequence is Probable chloroethene reductive dehalogenase membrane anchor protein (93 aa).

Helical transmembrane passes span 3–23 (AIYF…FTWF), 35–55 (WVLG…TYAS), and 64–84 (SAWI…LFAA).

It belongs to the PceB family.

It is found in the cell membrane. In terms of biological role, may act as a membrane anchor for the chloroethene reductive dehalogenase VcrA. This Dehalococcoides mccartyi (strain VS) protein is Probable chloroethene reductive dehalogenase membrane anchor protein.